Consider the following 149-residue polypeptide: MELNSLRPALGSTKNRKRIGRGIGSGHGKTATKGHKGQKARSGGSIKPGFEGGQMPLQRRLPKRGFRPLDRNEYVLINLQQLDVFEAGSCVDRDAMNAKGLLKKSDLPIKVLANGDLTKALTIKADKFSKSAIDKIQAAGGKIEGISAC.

The disordered stretch occupies residues 1-61 (MELNSLRPAL…GGQMPLQRRL (61 aa)). The segment covering 30-39 (TATKGHKGQK) has biased composition (basic residues).

Belongs to the universal ribosomal protein uL15 family. In terms of assembly, part of the 50S ribosomal subunit.

Binds to the 23S rRNA. The polypeptide is Large ribosomal subunit protein uL15 (Trichlorobacter lovleyi (strain ATCC BAA-1151 / DSM 17278 / SZ) (Geobacter lovleyi)).